Here is a 428-residue protein sequence, read N- to C-terminus: uncharacterized protein (428 aa).

The next 10 membrane-spanning stretches (helical) occupy residues 26–46 (VALT…DDVF), 51–71 (AGID…VSVL), 90–110 (AAPL…SALL), 135–155 (TPFL…TLVG), 177–197 (MAPA…WLLG), 223–243 (LLIK…AHPV), 278–298 (TLLF…TGVV), 314–334 (LLTV…IDNI), 359–379 (TFWW…AVAA), and 407–427 (VVTA…YFVF).

The protein belongs to the CitM (TC 2.A.11) transporter family.

It localises to the cell membrane. This is an uncharacterized protein from Mycobacterium tuberculosis (strain CDC 1551 / Oshkosh).